The chain runs to 156 residues: Ribosomal RNA large subunit methyltransferase H (156 aa).

S-adenosyl-L-methionine is bound by residues L73, G104, and 123-128 (LSALTM).

This sequence belongs to the RNA methyltransferase RlmH family. As to quaternary structure, homodimer.

The protein localises to the cytoplasm. It carries out the reaction pseudouridine(1915) in 23S rRNA + S-adenosyl-L-methionine = N(3)-methylpseudouridine(1915) in 23S rRNA + S-adenosyl-L-homocysteine + H(+). Its function is as follows. Specifically methylates the pseudouridine at position 1915 (m3Psi1915) in 23S rRNA. In Tolumonas auensis (strain DSM 9187 / NBRC 110442 / TA 4), this protein is Ribosomal RNA large subunit methyltransferase H.